The sequence spans 429 residues: Esterase/beta-lactamase LipL (429 aa).

S88 (acyl-ester intermediate) is an active-site residue.

This sequence belongs to the beta-lactamase family.

It is found in the secreted. The protein localises to the cell wall. The protein resides in the cell membrane. It carries out the reaction a fatty acid ester + H2O = an aliphatic alcohol + a fatty acid + H(+). The catalysed reaction is an acetyl ester + H2O = an aliphatic alcohol + acetate + H(+). It catalyses the reaction a butanoate ester + H2O = an aliphatic alcohol + butanoate + H(+). The enzyme catalyses an octanoate ester + H2O = an aliphatic alcohol + octanoate + H(+). It carries out the reaction decanoate ester + H2O = decanoate + an aliphatic alcohol + H(+). The catalysed reaction is a dodecanoate ester + H2O = an aliphatic alcohol + dodecanoate + H(+). It catalyses the reaction a tetradecanoate ester + H2O = an aliphatic alcohol + tetradecanoate + H(+). The enzyme catalyses hexadecanoate ester + H2O = an aliphatic alcohol + hexadecanoate + H(+). It carries out the reaction octadecanoate ester + H2O = an aliphatic alcohol + octadecanoate + H(+). The catalysed reaction is a hexanoate ester + H2O = an aliphatic alcohol + hexanoate + H(+). It catalyses the reaction a beta-lactam + H2O = a substituted beta-amino acid. Esterase and beta-lactamase activities are inhibited by the active site residue modifiers phenylmethanesulfonylflouride (PMSF) and diethylpyrocarbonate (DEPC). Functionally, shows both esterase and beta-lactamase activities, with a much higher activity against phenyl esters than against beta-lactams. Shows esterase activity against both long-chain and short-chain p-nitrophenol (pNP) esters, with a preference for shorter chain esters. Hydrolyzes substrates containing beta-lactam ring such as nitrocefin and ampicillin. Functions as an immunogen that activates both humoral and cell-mediated responses. The chain is Esterase/beta-lactamase LipL from Mycobacterium tuberculosis (strain ATCC 25618 / H37Rv).